The primary structure comprises 70 residues: Bowman-Birk type proteinase inhibitor A-II (70 aa).

Cystine bridges form between C11-C68, C12-C29, C15-C63, C17-C27, C36-C43, C40-C55, and C45-C53.

It belongs to the Bowman-Birk serine protease inhibitor family.

These proteins inhibit trypsin and chymotrypsin, having 2 sites of interaction with trypsin. The site of interaction with chymotrypsin has not been determined but is not independent of the trypsin-reactive sites. This is Bowman-Birk type proteinase inhibitor A-II from Arachis hypogaea (Peanut).